A 514-amino-acid polypeptide reads, in one-letter code: 2,3-bisphosphoglycerate-independent phosphoglycerate mutase (514 aa).

Residues aspartate 14 and serine 64 each contribute to the Mn(2+) site. The active-site Phosphoserine intermediate is the serine 64. Substrate contacts are provided by residues histidine 125, 155–156, arginine 187, arginine 193, 263–266, and lysine 336; these read RD and RADR. Positions 403, 407, 444, 445, and 463 each coordinate Mn(2+).

This sequence belongs to the BPG-independent phosphoglycerate mutase family. As to quaternary structure, monomer. The cofactor is Mn(2+).

It carries out the reaction (2R)-2-phosphoglycerate = (2R)-3-phosphoglycerate. It functions in the pathway carbohydrate degradation; glycolysis; pyruvate from D-glyceraldehyde 3-phosphate: step 3/5. Its activity is regulated as follows. Insensitive to vanadate. Catalyzes the interconversion of 2-phosphoglycerate (2-PGA) and 3-phosphoglycerate (3-PGA). The sequence is that of 2,3-bisphosphoglycerate-independent phosphoglycerate mutase from Escherichia coli (strain K12).